A 66-amino-acid chain; its full sequence is UPF0434 protein M446_0487 (66 aa).

The protein belongs to the UPF0434 family.

The chain is UPF0434 protein M446_0487 from Methylobacterium sp. (strain 4-46).